The following is a 708-amino-acid chain: Capsid scaffolding protein (708 aa).

Residues H63, S132, and H157 each act as charge relay system in the active site. Disordered stretches follow at residues S270–P339, H455–R565, and A593–E620. Residues P284–S293 show a composition bias toward low complexity. The segment covering S294 to P311 has biased composition (pro residues). Positions S326–P339 are enriched in low complexity. An interaction with pAP region spans residues A333–G352. A compositionally biased stretch (basic residues) spans K498–K513. 2 short sequence motifs (nuclear localization signal) span residues K510 to T515 and R537 to K543. Positions A593 to T615 are enriched in low complexity. Residues P688–E708 form an interaction with major capsid protein region.

This sequence belongs to the herpesviridae capsid scaffolding protein family. Homomultimer. Interacts with major capsid protein. In terms of assembly, exists in a monomer-dimer equilibrium with the dimer being the active species. Post-translationally, capsid scaffolding protein is cleaved by assemblin after formation of the spherical procapsid. As a result, the capsid obtains its mature, icosahedral shape. Cleavages occur at two or more sites: release (R-site) and maturation (M-site).

Its subcellular location is the host cytoplasm. The protein resides in the host nucleus. The catalysed reaction is Cleaves -Ala-|-Ser- and -Ala-|-Ala- bonds in the scaffold protein.. In terms of biological role, acts as a scaffold protein by binding major capsid protein in the cytoplasm, inducing the nuclear localization of both proteins. Multimerizes in the nucleus such as major capsid protein forms the icosahedral T=16 capsid. Autocatalytic cleavage releases the assembly protein, and subsequently abolishes interaction with major capsid protein. Cleavages products are evicted from the capsid before or during DNA packaging. Functionally, protease that plays an essential role in virion assembly within the nucleus. Catalyzes the cleavage of the assembly protein after formation of the spherical procapsid. By that cleavage, the capsid matures and gains its icosahedral shape. The cleavage sites seem to include -Ala-Ser-, -Ala-Ala-, as well as Ala-Thr bonds. Assemblin and cleavages products are evicted from the capsid before or during DNA packaging. Its function is as follows. Plays a major role in capsid assembly. Acts as a scaffold protein by binding major capsid protein. Multimerizes in the nucleus such as major capsid protein forms the icosahedral T=16 capsid. Cleaved by assemblin after capsid completion. The cleavages products are evicted from the capsid before or during DNA packaging. In Homo sapiens (Human), this protein is Capsid scaffolding protein (UL80).